We begin with the raw amino-acid sequence, 143 residues long: Small ribosomal subunit protein uS9 (143 aa).

The disordered stretch occupies residues 118–143; sequence DSRRTEPHKPNRSTKGPRAKRQKSYR. The span at 127–143 shows a compositional bias: basic residues; the sequence is PNRSTKGPRAKRQKSYR.

The protein belongs to the universal ribosomal protein uS9 family.

The chain is Small ribosomal subunit protein uS9 from Thermococcus sibiricus (strain DSM 12597 / MM 739).